The primary structure comprises 185 residues: Adenine phosphoribosyltransferase (185 aa).

Belongs to the purine/pyrimidine phosphoribosyltransferase family. Homodimer.

It is found in the cytoplasm. The catalysed reaction is AMP + diphosphate = 5-phospho-alpha-D-ribose 1-diphosphate + adenine. It functions in the pathway purine metabolism; AMP biosynthesis via salvage pathway; AMP from adenine: step 1/1. Its function is as follows. Catalyzes a salvage reaction resulting in the formation of AMP, that is energically less costly than de novo synthesis. This is Adenine phosphoribosyltransferase from Nocardioides sp. (strain ATCC BAA-499 / JS614).